We begin with the raw amino-acid sequence, 134 residues long: Small ribosomal subunit protein uS8c (134 aa).

It belongs to the universal ribosomal protein uS8 family. Part of the 30S ribosomal subunit.

Its subcellular location is the plastid. It localises to the chloroplast. Its function is as follows. One of the primary rRNA binding proteins, it binds directly to 16S rRNA central domain where it helps coordinate assembly of the platform of the 30S subunit. The chain is Small ribosomal subunit protein uS8c (rps8) from Phaseolus angularis (Azuki bean).